The primary structure comprises 692 residues: Hexamerin-1.1 (692 aa).

The N-terminal stretch at Met-1–Gly-18 is a signal peptide. Residue Asn-203 is glycosylated (N-linked (GlcNAc...) asparagine).

The protein belongs to the hemocyanin family. In terms of assembly, homohexamer. As to expression, larval fat body.

It is found in the secreted. Its subcellular location is the extracellular space. In terms of biological role, larval storage protein (LSP) which may serve as a store of amino acids for synthesis of adult proteins. The sequence is that of Hexamerin-1.1 (HexA) from Anopheles gambiae (African malaria mosquito).